The following is a 710-amino-acid chain: ARM REPEAT PROTEIN INTERACTING WITH ABF2 (710 aa).

The disordered stretch occupies residues 1–35 (MDQQPERREGRSFPERKGQKRKLEEGAAAVEDREI). ARM repeat units lie at residues 85-127 (EDLV…EKGS), 138-185 (PEYQ…NLAH), 188-227 (SSIK…TLAF), 230-269 (DDNK…NLVH), 272-311 (PHIK…QFAS), 314-353 (SDCK…RLAQ), 355-394 (AHNQ…GLAD), 429-468 (LKRL…HLCS), and 470-509 (EDQR…KLAN). A BTB domain is found at 541–608 (SDVTFLVEGR…IYTGSVDITN (68 aa)).

As to quaternary structure, interacts with ABF2. Interacts with DUF7/AIP1. As to expression, detected in embryos and most of the vegetative and reproductive organs.

It localises to the nucleus. The protein operates within protein modification; protein ubiquitination. May act as a substrate-specific adapter of an E3 ubiquitin-protein ligase complex (CUL3-RBX1-BTB) which mediates the ubiquitination and subsequent proteasomal degradation of target proteins. Acts as a positive regulator of ABA response via the modulation of the transcriptional activity of ABF2, a transcription factor which controls ABA-dependent gene expression via the G-box-type ABA-responsive elements. Negative regulator of seed germination and young seedling growth. The polypeptide is ARM REPEAT PROTEIN INTERACTING WITH ABF2 (ARIA) (Arabidopsis thaliana (Mouse-ear cress)).